Consider the following 352-residue polypeptide: Glycerol-1-phosphate dehydrogenase [NAD(P)+] (352 aa).

NAD(+) is bound by residues 99–103 (GTKID) and 121–124 (TSPS). D126 provides a ligand contact to substrate. Residue S130 coordinates NAD(+). D173 is a binding site for substrate. Positions 173 and 253 each coordinate Zn(2+). H257 contacts substrate. Residue H269 participates in Zn(2+) binding.

It belongs to the glycerol-1-phosphate dehydrogenase family. Requires Zn(2+) as cofactor.

It is found in the cytoplasm. The enzyme catalyses sn-glycerol 1-phosphate + NAD(+) = dihydroxyacetone phosphate + NADH + H(+). The catalysed reaction is sn-glycerol 1-phosphate + NADP(+) = dihydroxyacetone phosphate + NADPH + H(+). It functions in the pathway membrane lipid metabolism; glycerophospholipid metabolism. In terms of biological role, catalyzes the NAD(P)H-dependent reduction of dihydroxyacetonephosphate (DHAP or glycerone phosphate) to glycerol 1-phosphate (G1P). The G1P thus generated is used as the glycerophosphate backbone of phospholipids in the cellular membranes of Archaea. The chain is Glycerol-1-phosphate dehydrogenase [NAD(P)+] from Thermoplasma volcanium (strain ATCC 51530 / DSM 4299 / JCM 9571 / NBRC 15438 / GSS1).